Consider the following 226-residue polypeptide: Chalcone--flavanone isomerase 2-A (226 aa).

The substrate site is built by Thr-49, Asn-114, and Ser-191.

The protein belongs to the chalcone isomerase family. As to expression, mostly expressed in flowers, and, to a lower extent, in roots, shoots, and seeds.

It catalyses the reaction a chalcone = a flavanone.. It participates in secondary metabolite biosynthesis; flavonoid biosynthesis. In terms of biological role, catalyzes the intramolecular cyclization of bicyclic chalcones into tricyclic (S)-flavanones. Responsible for the isomerization of 4,2',4',6'-tetrahydroxychalcone (also termed chalcone) into naringenin. This is Chalcone--flavanone isomerase 2-A (CHI2-A) from Glycine max (Soybean).